The following is a 420-amino-acid chain: Cytochrome P-450 monooxygenase DoxA (420 aa).

Cysteine 367 contributes to the heme binding site.

It belongs to the cytochrome P450 family. Monomer. The cofactor is heme.

It is found in the cytoplasm. The enzyme catalyses 13-deoxydaunorubicin + NADPH + O2 + H(+) = 13-dihydrodaunorubicin + NADP(+) + H2O. It catalyses the reaction 13-dihydrodaunorubicin + NADPH + O2 + H(+) = daunorubicin + NADP(+) + 2 H2O. The catalysed reaction is 13-deoxycarminomycin + NADPH + O2 + H(+) = 13-dihydrocarminomycin + NADP(+) + H2O. It carries out the reaction 13-dihydrocarminomycin + NADPH + O2 + H(+) = carminomycin + NADP(+) + 2 H2O. The enzyme catalyses daunorubicin + NADPH + O2 + H(+) = doxorubicin + NADP(+) + H2O. The protein operates within antibiotic biosynthesis; daunorubicin biosynthesis. Its pathway is antibiotic biosynthesis; carminomycin biosynthesis. It functions in the pathway antibiotic biosynthesis; doxorubicin biosynthesis. In terms of biological role, involved in the biosynthesis of the anthracyclines carminomycin, daunorubicin (daunomycin) and doxorubicin (adriamycin) which are aromatic polyketide antibiotics that exhibit high cytotoxicity and are widely applied in the chemotherapy of a variety of cancers. In vivo, DoxA catalyzes the C-13 hydroxylation of 13-deoxycarminomycin and 13-deoxydaunorubicin to yield 13-dihydrocarminomycin and 13-dihydrodaunorubicin, respectively, as well as the oxidation of these 13-dihydro-anthracyclines to their respective 13-keto forms, carminomycin and daunorubicin. In vivo, it also catalyzes the C-14 hydroxylation of daunorubicin to form doxorubicin. It can only use NADP. DoxA acts jointly with DnrV. This chain is Cytochrome P-450 monooxygenase DoxA (doxA), found in Streptomyces peucetius subsp. caesius.